Reading from the N-terminus, the 455-residue chain is Probable glycine dehydrogenase (decarboxylating) subunit 1 (455 aa).

This sequence belongs to the GcvP family. N-terminal subunit subfamily. In terms of assembly, the glycine cleavage system is composed of four proteins: P, T, L and H. In this organism, the P 'protein' is a heterodimer of two subunits.

It carries out the reaction N(6)-[(R)-lipoyl]-L-lysyl-[glycine-cleavage complex H protein] + glycine + H(+) = N(6)-[(R)-S(8)-aminomethyldihydrolipoyl]-L-lysyl-[glycine-cleavage complex H protein] + CO2. Functionally, the glycine cleavage system catalyzes the degradation of glycine. The P protein binds the alpha-amino group of glycine through its pyridoxal phosphate cofactor; CO(2) is released and the remaining methylamine moiety is then transferred to the lipoamide cofactor of the H protein. This Saccharolobus islandicus (strain Y.G.57.14 / Yellowstone #1) (Sulfolobus islandicus) protein is Probable glycine dehydrogenase (decarboxylating) subunit 1.